Consider the following 162-residue polypeptide: CASP-like protein 1C1 (162 aa).

Over 1-7 (MAKLHRL) the chain is Cytoplasmic. The helical transmembrane segment at 8 to 28 (ISAVLRLAAAGAAAAAAIIMV) threads the bilayer. The Extracellular portion of the chain corresponds to 29-50 (TSHETTSFFGIEMEAKYSYTPS). Residues 51-71 (FVFFVVAFAVAFAYSLLALLA) form a helical membrane-spanning segment. Residues 72-79 (RPGSTASR) lie on the Cytoplasmic side of the membrane. Residues 80-100 (LLLLSDVMVGMLLTGAVAATG) form a helical membrane-spanning segment. At 101–128 (AISQVGKSGNEHAGWLPICAQVQAYCSH) the chain is on the extracellular side. Residues 129–149 (VMGALIAGFVSLLLYFLIIMY) traverse the membrane as a helical segment. Residues 150 to 162 (SLHAVAEPLCSCH) are Cytoplasmic-facing.

Belongs to the Casparian strip membrane proteins (CASP) family. In terms of assembly, homodimer and heterodimers.

It localises to the cell membrane. The chain is CASP-like protein 1C1 from Sorghum bicolor (Sorghum).